We begin with the raw amino-acid sequence, 800 residues long: DNA topoisomerase 4 subunit A (800 aa).

A Topo IIA-type catalytic domain is found at 31–495 (LPDVRDGLKP…EIEEIKIDKE (465 aa)). The active-site O-(5'-phospho-DNA)-tyrosine intermediate is Tyr-119.

It belongs to the type II topoisomerase GyrA/ParC subunit family. ParC type 2 subfamily. In terms of assembly, heterotetramer composed of ParC and ParE.

Its subcellular location is the cell membrane. It catalyses the reaction ATP-dependent breakage, passage and rejoining of double-stranded DNA.. Its function is as follows. Topoisomerase IV is essential for chromosome segregation. It relaxes supercoiled DNA. Performs the decatenation events required during the replication of a circular DNA molecule. The sequence is that of DNA topoisomerase 4 subunit A from Staphylococcus aureus (strain Mu50 / ATCC 700699).